Reading from the N-terminus, the 705-residue chain is Voltage-dependent calcium channel beta subunit-associated regulatory protein (705 aa).

Topologically, residues Met-1–Tyr-45 are extracellular. N-linked (GlcNAc...) asparagine glycosylation is present at Asn-29. The chain crosses the membrane as a helical; Signal-anchor for type III membrane protein span at residues Val-46–Val-66. The Cytoplasmic segment spans residues Leu-67–Ala-705. Disordered regions lie at residues Thr-91–Glu-113 and Gly-212–Ala-284. Polar residues predominate over residues Pro-245–Gly-254. Residues Gly-267–Ala-284 are compositionally biased toward gly residues. Ser-299 and Ser-304 each carry phosphoserine. Disordered regions lie at residues Pro-316–Gln-353, Phe-369–Asp-436, Ala-448–Tyr-540, and His-559–Ser-655. Residues Thr-344–Gln-353 are compositionally biased toward acidic residues. The segment covering His-371–Ala-382 has biased composition (pro residues). Positions Leu-383–Pro-397 are enriched in low complexity. Residues Ala-479–Pro-488 show a composition bias toward pro residues. The span at Arg-489–Leu-499 shows a compositional bias: basic and acidic residues. 2 positions are modified to phosphoserine: Ser-507 and Ser-528. Over residues Ala-567–Arg-585 the composition is skewed to basic residues. Residues Gly-591–Ala-614 are compositionally biased toward low complexity. Position 621 is a phosphoserine (Ser-621). Position 698 is a phosphothreonine (Thr-698). 2 positions are modified to phosphoserine: Ser-699 and Ser-703.

As to quaternary structure, interacts with voltage-dependent calcium channels CACNB1, CACNB2, CACNB3 and CACNB4 beta subunits; prevents their interaction with the CACNA1C alpha subunit thereby negatively regulating the activity of the corresponding calcium channels.

The protein resides in the cytoplasmic vesicle. It localises to the secretory vesicle. Its subcellular location is the synaptic vesicle membrane. It is found in the cell membrane. The protein localises to the cell projection. The protein resides in the growth cone. Negatively regulates voltage-gated calcium channels by preventing the interaction between their alpha and beta subunits. Thereby, negatively regulates calcium channels activity at the plasma membrane and indirectly inhibits calcium-regulated exocytosis. The polypeptide is Voltage-dependent calcium channel beta subunit-associated regulatory protein (Homo sapiens (Human)).